The chain runs to 677 residues: Methionine--tRNA ligase (677 aa).

Positions 15–25 match the 'HIGH' region motif; sequence PYANGSIHLGH. The Zn(2+) site is built by cysteine 146, cysteine 149, cysteine 159, and cysteine 162. Residues 333 to 337 carry the 'KMSKS' region motif; the sequence is KMSKS. Residue lysine 336 participates in ATP binding. The 103-residue stretch at 575 to 677 folds into the tRNA-binding domain; the sequence is DFAKVDLRVA…AGAKPGHQVK (103 aa).

The protein belongs to the class-I aminoacyl-tRNA synthetase family. MetG type 1 subfamily. In terms of assembly, homodimer. Zn(2+) serves as cofactor.

It is found in the cytoplasm. The catalysed reaction is tRNA(Met) + L-methionine + ATP = L-methionyl-tRNA(Met) + AMP + diphosphate. Its function is as follows. Is required not only for elongation of protein synthesis but also for the initiation of all mRNA translation through initiator tRNA(fMet) aminoacylation. This is Methionine--tRNA ligase from Shigella sonnei (strain Ss046).